Consider the following 92-residue polypeptide: Large ribosomal subunit protein uL24c (92 aa).

Belongs to the universal ribosomal protein uL24 family. Part of the 50S ribosomal subunit.

It localises to the plastid. It is found in the chloroplast. One of two assembly initiator proteins, it binds directly to the 5'-end of the 23S rRNA, where it nucleates assembly of the 50S subunit. This chain is Large ribosomal subunit protein uL24c (rpl24), found in Gracilaria tenuistipitata var. liui (Red alga).